The following is a 575-amino-acid chain: Dihydroxy-acid dehydratase (575 aa).

The tract at residues 1-27 (MSNQERQERPEKDPDLRSTEVTEGYEK) is disordered. Cys61 contributes to the [2Fe-2S] cluster binding site. Asp93 provides a ligand contact to Mg(2+). Cys134 contacts [2Fe-2S] cluster. Mg(2+)-binding residues include Asp135 and Lys136. At Lys136 the chain carries N6-carboxylysine. Position 206 (Cys206) interacts with [2Fe-2S] cluster. Glu460 is a binding site for Mg(2+). Catalysis depends on Ser486, which acts as the Proton acceptor.

Belongs to the IlvD/Edd family. Homodimer. [2Fe-2S] cluster serves as cofactor. Requires Mg(2+) as cofactor.

The enzyme catalyses (2R)-2,3-dihydroxy-3-methylbutanoate = 3-methyl-2-oxobutanoate + H2O. It carries out the reaction (2R,3R)-2,3-dihydroxy-3-methylpentanoate = (S)-3-methyl-2-oxopentanoate + H2O. It participates in amino-acid biosynthesis; L-isoleucine biosynthesis; L-isoleucine from 2-oxobutanoate: step 3/4. Its pathway is amino-acid biosynthesis; L-valine biosynthesis; L-valine from pyruvate: step 3/4. Its function is as follows. Functions in the biosynthesis of branched-chain amino acids. Catalyzes the dehydration of (2R,3R)-2,3-dihydroxy-3-methylpentanoate (2,3-dihydroxy-3-methylvalerate) into 2-oxo-3-methylpentanoate (2-oxo-3-methylvalerate) and of (2R)-2,3-dihydroxy-3-methylbutanoate (2,3-dihydroxyisovalerate) into 2-oxo-3-methylbutanoate (2-oxoisovalerate), the penultimate precursor to L-isoleucine and L-valine, respectively. The sequence is that of Dihydroxy-acid dehydratase from Haloarcula marismortui (strain ATCC 43049 / DSM 3752 / JCM 8966 / VKM B-1809) (Halobacterium marismortui).